A 272-amino-acid chain; its full sequence is MEYNPPNTRERIVARRQRMRRNSTEPVVPGWRWRLREGLRSGRIVSGIVFVISCFALFYVLFSSRFRVQTVEVVGAEFLSPERIVAAVPLRGLPIWLVDEEQAVAPLLTSPFVEEARLTLSLPDRARIVIVERQPAIYWRTGGVDYLVDRQGYVIEAAATPPAEDELVIVDSSNLPVEPGMRLDTDALTLARELAFVLPNQIGLHPAQIGWDFGLGVFVRTAQDQMIVFGRSERLERKLTILAYLLADGTPFTYLDLRPVNPFYQYRPDGSS.

The Cytoplasmic segment spans residues 1-43 (MEYNPPNTRERIVARRQRMRRNSTEPVVPGWRWRLREGLRSGR). The chain crosses the membrane as a helical span at residues 44 to 64 (IVSGIVFVISCFALFYVLFSS). The Extracellular segment spans residues 65 to 272 (RFRVQTVEVV…FYQYRPDGSS (208 aa)). A POTRA domain is found at 66–133 (FRVQTVEVVG…DRARIVIVER (68 aa)).

This sequence belongs to the FtsQ/DivIB family. FtsQ subfamily.

It is found in the cell membrane. Functionally, essential cell division protein. The sequence is that of Cell division protein FtsQ from Chloroflexus aurantiacus (strain ATCC 29366 / DSM 635 / J-10-fl).